Consider the following 251-residue polypeptide: 5'-nucleotidase SurE (251 aa).

Residues Asp-8, Asp-9, Ser-39, and Asn-91 each contribute to the a divalent metal cation site.

The protein belongs to the SurE nucleotidase family. A divalent metal cation is required as a cofactor.

Its subcellular location is the cytoplasm. The enzyme catalyses a ribonucleoside 5'-phosphate + H2O = a ribonucleoside + phosphate. Functionally, nucleotidase that shows phosphatase activity on nucleoside 5'-monophosphates. This is 5'-nucleotidase SurE from Halorhodospira halophila (strain DSM 244 / SL1) (Ectothiorhodospira halophila (strain DSM 244 / SL1)).